The sequence spans 135 residues: ATP synthase epsilon chain (135 aa).

Belongs to the ATPase epsilon chain family. F-type ATPases have 2 components, CF(1) - the catalytic core - and CF(0) - the membrane proton channel. CF(1) has five subunits: alpha(3), beta(3), gamma(1), delta(1), epsilon(1). CF(0) has three main subunits: a, b and c.

The protein localises to the cell inner membrane. In terms of biological role, produces ATP from ADP in the presence of a proton gradient across the membrane. The sequence is that of ATP synthase epsilon chain from Rhizobium rhizogenes (strain K84 / ATCC BAA-868) (Agrobacterium radiobacter).